We begin with the raw amino-acid sequence, 421 residues long: Tyrosine--tRNA ligase (421 aa).

Residue Tyr-36 participates in L-tyrosine binding. The short motif at 41–50 (PTADSLHIGH) is the 'HIGH' region element. The L-tyrosine site is built by Tyr-170 and Gln-174. A 'KMSKS' region motif is present at residues 231–235 (KFGKS). Lys-234 lines the ATP pocket. The 68-residue stretch at 353–420 (TNIVEALIET…KKKYFMVNYQ (68 aa)) folds into the S4 RNA-binding domain.

Belongs to the class-I aminoacyl-tRNA synthetase family. TyrS type 1 subfamily. In terms of assembly, homodimer.

It localises to the cytoplasm. It catalyses the reaction tRNA(Tyr) + L-tyrosine + ATP = L-tyrosyl-tRNA(Tyr) + AMP + diphosphate + H(+). Functionally, catalyzes the attachment of tyrosine to tRNA(Tyr) in a two-step reaction: tyrosine is first activated by ATP to form Tyr-AMP and then transferred to the acceptor end of tRNA(Tyr). This is Tyrosine--tRNA ligase from Staphylococcus epidermidis (strain ATCC 35984 / DSM 28319 / BCRC 17069 / CCUG 31568 / BM 3577 / RP62A).